Reading from the N-terminus, the 136-residue chain is Small ribosomal subunit protein uS8 (136 aa).

The protein belongs to the universal ribosomal protein uS8 family. In terms of assembly, part of the 30S ribosomal subunit. Contacts proteins S5 and S12.

Functionally, one of the primary rRNA binding proteins, it binds directly to 16S rRNA central domain where it helps coordinate assembly of the platform of the 30S subunit. This Sulfurihydrogenibium sp. (strain YO3AOP1) protein is Small ribosomal subunit protein uS8.